The primary structure comprises 534 residues: T-complex protein 1 subunit gamma (534 aa).

Residue Met-1 is modified to N-acetylmethionine. At Ser-257 the chain carries Phosphoserine. A disulfide bridge links Cys-371 with Cys-377.

This sequence belongs to the TCP-1 chaperonin family. In terms of assembly, heterooligomeric complex of about 850 to 900 kDa that forms two stacked rings, 12 to 16 nm in diameter.

The protein localises to the cytoplasm. Functionally, molecular chaperone; assists the folding of proteins upon ATP hydrolysis. Known to play a role, in vitro, in the folding of actin and tubulin. In yeast may play a role in mitotic spindle formation. This Saccharomyces cerevisiae (strain ATCC 204508 / S288c) (Baker's yeast) protein is T-complex protein 1 subunit gamma (CCT3).